Here is a 220-residue protein sequence, read N- to C-terminus: uncharacterized protein (220 aa).

The interval Asp194–Ile220 is disordered. Polar residues predominate over residues Gln195–Asn204.

This is an uncharacterized protein from Borreliella burgdorferi (strain ATCC 35210 / DSM 4680 / CIP 102532 / B31) (Borrelia burgdorferi).